The primary structure comprises 686 residues: Endonuclease GajA (686 aa).

The segment at 1–423 (MYLKSLKIYN…NYVTTKNNYT (423 aa)) is ATPase domain. 52–56 (NCGKT) is an ATP binding site. A toprim domain region spans residues 463 to 599 (FFSDAIIFVE…TSFEEAFILT (137 aa)). A divalent metal cation-binding residues include glutamate 472, glutamate 476, aspartate 559, and glutamate 604.

In terms of assembly, homotetramer. Forms the core of the anti-phage defense complex. Interacts with GajB; 2 GajB dimers dock at opposite sides of the GajA complex to form a 4:4 GajA-GajB assembly (GajAB). GajAB interacts with Bacillus phage Phi3T Gad1 protein; this interaction forms a 4:4:8 GajAB-Gad1 complex and leads to GajAB inhibition. Mg(2+) is required as a cofactor.

Component of antiviral defense system Gabija type II, composed of GajA and GajB. Probably a nicking endonuclease that is strongly inhibited by physiological levels of nucleotides (NTP and dNTP). Expression of Gabija type II in B.subtilis (strain BEST7003) confers resistance to phages phi105, and SpBeta. During viral replication, when nucleotides are rapidly consumed, it is de-suppressed and degrades target DNA. This chain is Endonuclease GajA, found in Bacillus cereus (strain HuB5-5).